Consider the following 510-residue polypeptide: Bifunctional pantoate ligase/cytidylate kinase (510 aa).

A pantoate--beta-alanine ligase region spans residues 1-276 (MKKVIIRKTE…CGETRLIDHV (276 aa)). 29–36 (MGNLHNGH) serves as a coordination point for ATP. The active-site Proton donor is the His-36. Gln-61 is a binding site for (R)-pantoate. A beta-alanine-binding site is contributed by Gln-61. 150 to 153 (GEKD) serves as a coordination point for ATP. Gln-156 provides a ligand contact to (R)-pantoate. An ATP-binding site is contributed by 187-190 (LSSR). The interval 277–510 (FLMKRSPIIA…DKIPKETQIR (234 aa)) is cytidylate kinase.

This sequence in the N-terminal section; belongs to the pantothenate synthetase family. The protein in the C-terminal section; belongs to the cytidylate kinase family. Type 1 subfamily.

The protein resides in the cytoplasm. It catalyses the reaction (R)-pantoate + beta-alanine + ATP = (R)-pantothenate + AMP + diphosphate + H(+). It carries out the reaction CMP + ATP = CDP + ADP. The catalysed reaction is dCMP + ATP = dCDP + ADP. It participates in cofactor biosynthesis; (R)-pantothenate biosynthesis; (R)-pantothenate from (R)-pantoate and beta-alanine: step 1/1. Its function is as follows. Catalyzes the condensation of pantoate with beta-alanine in an ATP-dependent reaction via a pantoyl-adenylate intermediate. Functionally, catalyzes the transfer of a phosphate group from ATP to either CMP or dCMP to form CDP or dCDP and ADP, respectively. In Prochlorococcus marinus (strain MIT 9312), this protein is Bifunctional pantoate ligase/cytidylate kinase.